Here is a 336-residue protein sequence, read N- to C-terminus: Tetraacyldisaccharide 4'-kinase (336 aa).

T60–T67 is an ATP binding site.

The protein belongs to the LpxK family.

It carries out the reaction a lipid A disaccharide + ATP = a lipid IVA + ADP + H(+). Its pathway is glycolipid biosynthesis; lipid IV(A) biosynthesis; lipid IV(A) from (3R)-3-hydroxytetradecanoyl-[acyl-carrier-protein] and UDP-N-acetyl-alpha-D-glucosamine: step 6/6. Its function is as follows. Transfers the gamma-phosphate of ATP to the 4'-position of a tetraacyldisaccharide 1-phosphate intermediate (termed DS-1-P) to form tetraacyldisaccharide 1,4'-bis-phosphate (lipid IVA). This Pseudomonas entomophila (strain L48) protein is Tetraacyldisaccharide 4'-kinase.